A 1132-amino-acid polypeptide reads, in one-letter code: Sentrin-specific protease 6 (1132 aa).

Disordered stretches follow at residues 23–51 (SKRD…DGAN) and 327–388 (LPGG…VPST). Phosphoserine is present on residues Ser-41, Ser-355, Ser-356, Ser-371, and Ser-373. The residue at position 436 (Thr-436) is a Phosphothreonine. Residue Lys-648 forms a Glycyl lysine isopeptide (Lys-Gly) (interchain with G-Cter in SUMO2) linkage. Residues 686-1132 (ISVTNEDLHC…QYASASGGSE (447 aa)) form a protease region. Residues His-785 and Asp-936 contribute to the active site. Position 938 is a phosphoserine (Ser-938). Cys-1049 is an active-site residue. Ser-1131 bears the Phosphoserine mark.

Belongs to the peptidase C48 family. As to quaternary structure, interacts with RXRA. Forms a complex with KAT5-TIP60 and UBE2I in response to UV irradiation. Interacts with RPA1 to maintain it in hyposumoylated state during S phase preventing DNA repair initiation.

Its subcellular location is the nucleus. Its pathway is protein modification; protein sumoylation. Functionally, protease that deconjugates SUMO1, SUMO2 and SUMO3 from targeted proteins. Processes preferentially poly-SUMO2 and poly-SUMO3 chains, but does not efficiently process SUMO1, SUMO2 and SUMO3 precursors. Deconjugates SUMO1 from RXRA, leading to transcriptional activation. Involved in chromosome alignment and spindle assembly, by regulating the kinetochore CENPH-CENPI-CENPK complex. Desumoylates PML and CENPI, protecting them from degradation by the ubiquitin ligase RNF4, which targets polysumoylated proteins for proteasomal degradation. Also desumoylates RPA1, thus preventing recruitment of RAD51 to the DNA damage foci to initiate DNA repair through homologous recombination. The protein is Sentrin-specific protease 6 (Senp6) of Mus musculus (Mouse).